A 582-amino-acid polypeptide reads, in one-letter code: DNA mismatch repair protein MutL (582 aa).

It belongs to the DNA mismatch repair MutL/HexB family.

Its function is as follows. This protein is involved in the repair of mismatches in DNA. It is required for dam-dependent methyl-directed DNA mismatch repair. May act as a 'molecular matchmaker', a protein that promotes the formation of a stable complex between two or more DNA-binding proteins in an ATP-dependent manner without itself being part of a final effector complex. This is DNA mismatch repair protein MutL from Buchnera aphidicola subsp. Schizaphis graminum (strain Sg).